The sequence spans 549 residues: Protein EPD2 (549 aa).

The first 20 residues, 1–20 (MISVIKSLLTLSVLSTLAAA), serve as a signal peptide directing secretion. A glycan (N-linked (GlcNAc...) asparagine) is linked at asparagine 41. Cysteine 82 and cysteine 111 are oxidised to a cystine. Residues asparagine 173 and asparagine 261 are each glycosylated (N-linked (GlcNAc...) asparagine). Disulfide bonds link cysteine 224–cysteine 358, cysteine 242–cysteine 273, cysteine 381–cysteine 432, cysteine 390–cysteine 456, and cysteine 409–cysteine 414. Asparagine 467 carries an N-linked (GlcNAc...) asparagine glycan. The tract at residues 470–518 (ASTSCSAAGGRGLQSGRRSSTTRGGSSSSRSSSSSSSSSTGSGSSNAGI) is disordered. A compositionally biased stretch (low complexity) spans 484–514 (SGRRSSTTRGGSSSSRSSSSSSSSSTGSGSS).

The protein belongs to the glycosyl hydrolase 72 family.

It is found in the cell membrane. The chain is Protein EPD2 (EPD2) from Candida maltosa (Yeast).